The following is a 235-amino-acid chain: Carbohydrate deacetylase (235 aa).

Positions 61 and 124 each coordinate Mg(2+).

The protein belongs to the YdjC deacetylase family. It depends on Mg(2+) as a cofactor.

Functionally, probably catalyzes the deacetylation of acetylated carbohydrates an important step in the degradation of oligosaccharides. The chain is Carbohydrate deacetylase from Bacillus cereus (strain B4264).